A 124-amino-acid polypeptide reads, in one-letter code: uncharacterized protein (124 aa).

It localises to the cytoplasm. Its subcellular location is the nucleus. This is an uncharacterized protein from Schizosaccharomyces pombe (strain 972 / ATCC 24843) (Fission yeast).